Consider the following 121-residue polypeptide: Small ribosomal subunit protein uS13 (121 aa).

The tract at residues 97-121 (VRGQRTRTNARTRRGARKTVAGKKK) is disordered. Residues 100-121 (QRTRTNARTRRGARKTVAGKKK) are compositionally biased toward basic residues.

Belongs to the universal ribosomal protein uS13 family. In terms of assembly, part of the 30S ribosomal subunit. Forms a loose heterodimer with protein S19. Forms two bridges to the 50S subunit in the 70S ribosome.

Functionally, located at the top of the head of the 30S subunit, it contacts several helices of the 16S rRNA. In the 70S ribosome it contacts the 23S rRNA (bridge B1a) and protein L5 of the 50S subunit (bridge B1b), connecting the 2 subunits; these bridges are implicated in subunit movement. Contacts the tRNAs in the A and P-sites. The polypeptide is Small ribosomal subunit protein uS13 (Synechococcus sp. (strain CC9311)).